Here is a 446-residue protein sequence, read N- to C-terminus: Glutamine synthetase (446 aa).

The GS beta-grasp domain occupies 18–103 (ENVRYLRLQF…LICDVYKTDG (86 aa)). The GS catalytic domain occupies 110–446 (PRANLKRVLK…WERDQYMKQY (337 aa)). Residues E134 and E136 each coordinate Mg(2+). Residue E186 coordinates ATP. Residues E191 and E198 each contribute to the Mg(2+) site. Residues 242–243 (NG) and G243 contribute to the L-glutamate site. Residue H247 participates in Mg(2+) binding. S251 is a binding site for ATP. Positions 300, 306, and 318 each coordinate L-glutamate. ATP-binding residues include R318 and R323. Residue E335 coordinates Mg(2+). R337 is an L-glutamate binding site.

Belongs to the glutamine synthetase family. Oligomer of 12 subunits arranged in the form of two hexagons. In its feedback-inhibited form, interacts with TnrA in order to block its DNA-binding activity. Mg(2+) serves as cofactor.

The protein resides in the cytoplasm. The enzyme catalyses L-glutamate + NH4(+) + ATP = L-glutamine + ADP + phosphate + H(+). With respect to regulation, inhibited by glutamine. Glutamine synthetase (GS) is an unusual multitasking protein that functions as an enzyme, a transcription coregulator, and a chaperone in ammonium assimilation and in the regulation of genes involved in nitrogen metabolism. It catalyzes the ATP-dependent biosynthesis of glutamine from glutamate and ammonia. Feedback-inhibited GlnA also interacts with and regulates the activity of the transcriptional regulator TnrA. During nitrogen limitation, TnrA is in its DNA-binding active state and turns on the transcription of genes required for nitrogen assimilation. Under conditions of nitrogen excess, feedback-inhibited GlnA forms a stable complex with TnrA, which inhibits its DNA-binding activity. In contrast, feedback-inhibited GlnA acts as a chaperone to stabilize the DNA-binding activity of GlnR, which represses the transcription of nitrogen assimilation genes. The polypeptide is Glutamine synthetase (Staphylococcus aureus (strain MSSA476)).